A 360-amino-acid polypeptide reads, in one-letter code: Protein-glutamate methylesterase/protein-glutamine glutaminase 3 (360 aa).

The Response regulatory domain maps to 14–131 (RVLVIDDSAT…AEGVQAYAEE (118 aa)). D65 is modified (4-aspartylphosphate). Residues 169-360 (AGKDGRVVAV…AGKLMELDGA (192 aa)) enclose the CheB-type methylesterase domain. Catalysis depends on residues S181, H207, and D303.

The protein belongs to the CheB family. In terms of processing, phosphorylated by CheA. Phosphorylation of the N-terminal regulatory domain activates the methylesterase activity.

Its subcellular location is the cytoplasm. It catalyses the reaction [protein]-L-glutamate 5-O-methyl ester + H2O = L-glutamyl-[protein] + methanol + H(+). The catalysed reaction is L-glutaminyl-[protein] + H2O = L-glutamyl-[protein] + NH4(+). Functionally, involved in chemotaxis. Part of a chemotaxis signal transduction system that modulates chemotaxis in response to various stimuli. Catalyzes the demethylation of specific methylglutamate residues introduced into the chemoreceptors (methyl-accepting chemotaxis proteins or MCP) by CheR. Also mediates the irreversible deamidation of specific glutamine residues to glutamic acid. This is Protein-glutamate methylesterase/protein-glutamine glutaminase 3 from Burkholderia thailandensis (strain ATCC 700388 / DSM 13276 / CCUG 48851 / CIP 106301 / E264).